Reading from the N-terminus, the 378-residue chain is Quinolinate synthase (378 aa).

Iminosuccinate contacts are provided by His59 and Ser80. A [4Fe-4S] cluster-binding site is contributed by Cys125. Iminosuccinate contacts are provided by residues 151–153 (YAN) and Ser168. Cys212 is a [4Fe-4S] cluster binding site. Residues 238–240 (HPE) and Thr255 contribute to the iminosuccinate site. Residue Cys309 participates in [4Fe-4S] cluster binding.

The protein belongs to the quinolinate synthase family. Type 1 subfamily. [4Fe-4S] cluster is required as a cofactor.

It is found in the cytoplasm. The catalysed reaction is iminosuccinate + dihydroxyacetone phosphate = quinolinate + phosphate + 2 H2O + H(+). Its pathway is cofactor biosynthesis; NAD(+) biosynthesis; quinolinate from iminoaspartate: step 1/1. Its function is as follows. Catalyzes the condensation of iminoaspartate with dihydroxyacetone phosphate to form quinolinate. The chain is Quinolinate synthase from Burkholderia cenocepacia (strain HI2424).